We begin with the raw amino-acid sequence, 157 residues long: SsrA-binding protein (157 aa).

The segment at 132–157 (EHDKRDTIKEREGKREVERAMKSRHR) is disordered.

This sequence belongs to the SmpB family.

It is found in the cytoplasm. Functionally, required for rescue of stalled ribosomes mediated by trans-translation. Binds to transfer-messenger RNA (tmRNA), required for stable association of tmRNA with ribosomes. tmRNA and SmpB together mimic tRNA shape, replacing the anticodon stem-loop with SmpB. tmRNA is encoded by the ssrA gene; the 2 termini fold to resemble tRNA(Ala) and it encodes a 'tag peptide', a short internal open reading frame. During trans-translation Ala-aminoacylated tmRNA acts like a tRNA, entering the A-site of stalled ribosomes, displacing the stalled mRNA. The ribosome then switches to translate the ORF on the tmRNA; the nascent peptide is terminated with the 'tag peptide' encoded by the tmRNA and targeted for degradation. The ribosome is freed to recommence translation, which seems to be the essential function of trans-translation. The protein is SsrA-binding protein of Paracidovorax citrulli (strain AAC00-1) (Acidovorax citrulli).